Reading from the N-terminus, the 210-residue chain is 3-hexulose-6-phosphate synthase (210 aa).

The protein belongs to the HPS/KGPDC family. HPS subfamily.

It carries out the reaction D-ribulose 5-phosphate + formaldehyde = D-arabino-hex-3-ulose 6-phosphate. Its pathway is one-carbon metabolism; formaldehyde assimilation via RuMP pathway; D-fructose 6-phosphate from D-ribulose 5-phosphate and formaldehyde: step 1/2. In terms of biological role, catalyzes the condensation of ribulose 5-phosphate with formaldehyde to form 3-hexulose 6-phosphate. In Staphylococcus aureus (strain NCTC 8325 / PS 47), this protein is 3-hexulose-6-phosphate synthase.